The primary structure comprises 148 residues: Hut operon positive regulatory protein (148 aa).

The protein belongs to the HutP family. In terms of assembly, homohexamer.

Antiterminator that binds to cis-acting regulatory sequences on the mRNA in the presence of histidine, thereby suppressing transcription termination and activating the hut operon for histidine utilization. This is Hut operon positive regulatory protein from Bacillus velezensis (strain DSM 23117 / BGSC 10A6 / LMG 26770 / FZB42) (Bacillus amyloliquefaciens subsp. plantarum).